The following is a 99-amino-acid chain: UPF0235 protein HS_1657 (99 aa).

It belongs to the UPF0235 family.

The protein is UPF0235 protein HS_1657 of Histophilus somni (strain 129Pt) (Haemophilus somnus).